The primary structure comprises 252 residues: Chitooligosaccharide deacetylase (252 aa).

Mg(2+) contacts are provided by H61 and H125.

It belongs to the YdjC deacetylase family. ChbG subfamily. As to quaternary structure, homodimer. Mg(2+) is required as a cofactor.

The protein resides in the cytoplasm. The catalysed reaction is N,N'-diacetylchitobiose + H2O = N-acetyl-beta-D-glucosaminyl-(1-&gt;4)-D-glucosamine + acetate. It catalyses the reaction diacetylchitobiose-6'-phosphate + H2O = N'-monoacetylchitobiose-6'-phosphate + acetate. It functions in the pathway glycan degradation; chitin degradation. In terms of biological role, involved in the degradation of chitin. ChbG is essential for growth on the acetylated chitooligosaccharides chitobiose and chitotriose but is dispensable for growth on cellobiose and chitosan dimer, the deacetylated form of chitobiose. Deacetylation of chitobiose-6-P and chitotriose-6-P is necessary for both the activation of the chb promoter by the regulatory protein ChbR and the hydrolysis of phosphorylated beta-glucosides by the phospho-beta-glucosidase ChbF. Catalyzes the removal of only one acetyl group from chitobiose-6-P to yield monoacetylchitobiose-6-P, the inducer of ChbR and the substrate of ChbF. This chain is Chitooligosaccharide deacetylase, found in Escherichia coli O6:H1 (strain CFT073 / ATCC 700928 / UPEC).